Here is a 106-residue protein sequence, read N- to C-terminus: MKKIKRDDEVIVTTGKDKDKRGKVLKVLDDGRVLVSGINMMKKHTKPNPMLGTPGGIVEKEAPIQASNVAIFNPQTGKADRVGFQIKEDGTKVRIFKSTNEAVDNQ.

It belongs to the universal ribosomal protein uL24 family. As to quaternary structure, part of the 50S ribosomal subunit.

In terms of biological role, one of two assembly initiator proteins, it binds directly to the 5'-end of the 23S rRNA, where it nucleates assembly of the 50S subunit. Its function is as follows. One of the proteins that surrounds the polypeptide exit tunnel on the outside of the subunit. This chain is Large ribosomal subunit protein uL24, found in Marinobacter nauticus (strain ATCC 700491 / DSM 11845 / VT8) (Marinobacter aquaeolei).